Reading from the N-terminus, the 217-residue chain is Methylthioribulose-1-phosphate dehydratase (217 aa).

The Zn(2+) site is built by histidine 106 and histidine 108.

This sequence belongs to the aldolase class II family. MtnB subfamily. Zn(2+) is required as a cofactor.

The catalysed reaction is 5-(methylsulfanyl)-D-ribulose 1-phosphate = 5-methylsulfanyl-2,3-dioxopentyl phosphate + H2O. Its pathway is amino-acid biosynthesis; L-methionine biosynthesis via salvage pathway; L-methionine from S-methyl-5-thio-alpha-D-ribose 1-phosphate: step 2/6. Functionally, catalyzes the dehydration of methylthioribulose-1-phosphate (MTRu-1-P) into 2,3-diketo-5-methylthiopentyl-1-phosphate (DK-MTP-1-P). This is Methylthioribulose-1-phosphate dehydratase from Xanthomonas campestris pv. campestris (strain 8004).